The chain runs to 588 residues: Calcium/calmodulin-dependent protein kinase kinase 2 (588 aa).

Positions M1–A14 are enriched in polar residues. Disordered stretches follow at residues M1–P33 and G78–S100. The residue at position 2 (S2) is an N-acetylserine. Phosphoserine occurs at positions 100, 114, 129, 133, and 137. A compositionally biased stretch (low complexity) spans Y128–R139. The disordered stretch occupies residues Y128 to H149. The Protein kinase domain occupies Y165–V446. Residues I171–V179 and K194 contribute to the ATP site. The segment at Q204–P226 is RP domain. Positions A205 to Q225 are disordered. The Proton acceptor role is filled by D312. The interval E472–H477 is autoinhibitory domain. Residues V475–F500 form a calmodulin-binding region. 5 positions are modified to phosphoserine: P479, S495, S511, T522, and S572. The disordered stretch occupies residues G497–E588. The segment covering P521 to Q536 has biased composition (basic and acidic residues). The segment covering L579–E588 has biased composition (basic and acidic residues).

This sequence belongs to the protein kinase superfamily. Ser/Thr protein kinase family. In terms of assembly, interacts with calmodulin. In terms of processing, autophosphorylated and phosphorylated by PKA. Each isoform may show a different pattern of phosphorylation. In terms of tissue distribution, ubiquitously expressed with higher levels in the brain. Intermediate levels are detected in spleen, prostate, thyroid and leukocytes. The lowest level is in lung.

The protein localises to the nucleus. It is found in the cytoplasm. The protein resides in the cell projection. It localises to the neuron projection. It carries out the reaction L-seryl-[protein] + ATP = O-phospho-L-seryl-[protein] + ADP + H(+). The enzyme catalyses L-threonyl-[protein] + ATP = O-phospho-L-threonyl-[protein] + ADP + H(+). Its activity is regulated as follows. Activated by Ca(2+)/calmodulin. Binding of calmodulin may relieve intrasteric autoinhibition. Autophosphorylation does not alter activity or regulation by Ca(2+)/calmodulin. In part, activity is independent on Ca(2+)/calmodulin. Its function is as follows. Calcium/calmodulin-dependent protein kinase belonging to a proposed calcium-triggered signaling cascade involved in a number of cellular processes. Isoform 1, isoform 2 and isoform 3 phosphorylate CAMK1 and CAMK4. Isoform 3 phosphorylates CAMK1D. Isoform 4, isoform 5 and isoform 6 lacking part of the calmodulin-binding domain are inactive. Efficiently phosphorylates 5'-AMP-activated protein kinase (AMPK) trimer, including that consisting of PRKAA1, PRKAB1 and PRKAG1. This phosphorylation is stimulated in response to Ca(2+) signals. Seems to be involved in hippocampal activation of CREB1. May play a role in neurite growth. Isoform 3 may promote neurite elongation, while isoform 1 may promoter neurite branching. The polypeptide is Calcium/calmodulin-dependent protein kinase kinase 2 (CAMKK2) (Homo sapiens (Human)).